The following is a 68-amino-acid chain: DNA-directed RNA polymerase subunit omega (68 aa).

The protein belongs to the RNA polymerase subunit omega family. As to quaternary structure, the RNAP catalytic core consists of 2 alpha, 1 beta, 1 beta' and 1 omega subunit. When a sigma factor is associated with the core the holoenzyme is formed, which can initiate transcription.

The catalysed reaction is RNA(n) + a ribonucleoside 5'-triphosphate = RNA(n+1) + diphosphate. Promotes RNA polymerase assembly. Latches the N- and C-terminal regions of the beta' subunit thereby facilitating its interaction with the beta and alpha subunits. This Citrifermentans bemidjiense (strain ATCC BAA-1014 / DSM 16622 / JCM 12645 / Bem) (Geobacter bemidjiensis) protein is DNA-directed RNA polymerase subunit omega.